A 603-amino-acid polypeptide reads, in one-letter code: Cholinesterase (603 aa).

Residues 1-29 form the signal peptide; it reads MQTQHTKVTQTHFLLWILLLCMPFGKSHT. Residue N86 is glycosylated (N-linked (GlcNAc...) asparagine). A disulfide bond links C94 and C121. N-linked (GlcNAc...) asparagine glycosylation is present at N135. 145 to 146 is a substrate binding site; it reads GG. The active-site Acyl-ester intermediate is S227. A Phosphoserine modification is found at S227. The N-linked (GlcNAc...) asparagine glycan is linked to N270. A disulfide bridge connects residues C281 and C292. E354 (charge relay system) is an active-site residue. A glycan (N-linked (GlcNAc...) asparagine) is linked at N370. A disulfide bridge connects residues C429 and C548. H467 acts as the Charge relay system in catalysis. N-linked (GlcNAc...) asparagine glycans are attached at residues N484, N510, and N515.

Belongs to the type-B carboxylesterase/lipase family. As to quaternary structure, homotetramer; disulfide-linked. Dimer of dimers. Present in most cells except erythrocytes.

It is found in the secreted. The catalysed reaction is an acylcholine + H2O = a carboxylate + choline + H(+). Esterase with broad substrate specificity. Contributes to the inactivation of the neurotransmitter acetylcholine. Can degrade neurotoxic organophosphate esters. This Mus musculus (Mouse) protein is Cholinesterase (Bche).